Here is a 380-residue protein sequence, read N- to C-terminus: Bifunctional enzyme IspD/IspF (380 aa).

The 2-C-methyl-D-erythritol 4-phosphate cytidylyltransferase stretch occupies residues 1 to 224 (MTIPATYAAI…ERILGDAMDI (224 aa)). Residues 225 to 380 (RLGNGFDVHA…SIATATLVKG (156 aa)) form a 2-C-methyl-D-erythritol 2,4-cyclodiphosphate synthase region. Residues aspartate 231 and histidine 233 each coordinate a divalent metal cation. Residues 231–233 (DVH) and 257–258 (HS) contribute to the 4-CDP-2-C-methyl-D-erythritol 2-phosphate site. Histidine 265 serves as a coordination point for a divalent metal cation. 4-CDP-2-C-methyl-D-erythritol 2-phosphate contacts are provided by residues 279–281 (DIG), 355–358 (TTSE), phenylalanine 362, and arginine 365.

In the N-terminal section; belongs to the IspD/TarI cytidylyltransferase family. IspD subfamily. This sequence in the C-terminal section; belongs to the IspF family. The cofactor is a divalent metal cation.

The enzyme catalyses 2-C-methyl-D-erythritol 4-phosphate + CTP + H(+) = 4-CDP-2-C-methyl-D-erythritol + diphosphate. It carries out the reaction 4-CDP-2-C-methyl-D-erythritol 2-phosphate = 2-C-methyl-D-erythritol 2,4-cyclic diphosphate + CMP. The protein operates within isoprenoid biosynthesis; isopentenyl diphosphate biosynthesis via DXP pathway; isopentenyl diphosphate from 1-deoxy-D-xylulose 5-phosphate: step 2/6. It participates in isoprenoid biosynthesis; isopentenyl diphosphate biosynthesis via DXP pathway; isopentenyl diphosphate from 1-deoxy-D-xylulose 5-phosphate: step 4/6. Bifunctional enzyme that catalyzes the formation of 4-diphosphocytidyl-2-C-methyl-D-erythritol from CTP and 2-C-methyl-D-erythritol 4-phosphate (MEP) (IspD), and catalyzes the conversion of 4-diphosphocytidyl-2-C-methyl-D-erythritol 2-phosphate (CDP-ME2P) to 2-C-methyl-D-erythritol 2,4-cyclodiphosphate (ME-CPP) with a corresponding release of cytidine 5-monophosphate (CMP) (IspF). The chain is Bifunctional enzyme IspD/IspF from Paracoccus denitrificans (strain Pd 1222).